Consider the following 218-residue polypeptide: Zinc metalloproteinase-disintegrin-like bothrojarin-2 (218 aa).

Residues 14–100 (PPVCGNELLE…QCPTDDFHKN (87 aa)) form the Disintegrin domain. Ca(2+) is bound by residues V16, L21, E23, E26, and D29. Intrachain disulfides connect C28-C46, C30-C41, C40-C63, C54-C60, C59-C85, C72-C92, C79-C111, C104-C116, C123-C173, and C151-C161. The D/ECD-tripeptide motif lies at 78-80 (ECD).

It belongs to the venom metalloproteinase (M12B) family. P-III subfamily. P-IIIa sub-subfamily. Monomer. The cofactor is Zn(2+). Post-translationally, glycosylated. In terms of tissue distribution, expressed by the venom gland.

It localises to the secreted. Its function is as follows. The hemorrhagic metalloproteinase-disintegrin-like bothrojarin-1 is a potent inhibitor of collagen-induced platelet aggregation by blockage of alpha-2/beta-1 (ITGA2/ITGB1) integrin. It does not present any fibrinogen-clotting activity. This Bothrops jararaca (Jararaca) protein is Zinc metalloproteinase-disintegrin-like bothrojarin-2.